Reading from the N-terminus, the 292-residue chain is uncharacterized protein (292 aa).

The disordered stretch occupies residues 62–81; sequence ESSSDSDMGFHESQQNQKSN.

This is an uncharacterized protein from Homo sapiens (Human).